A 123-amino-acid polypeptide reads, in one-letter code: Large ribosomal subunit protein bL12 (123 aa).

The protein belongs to the bacterial ribosomal protein bL12 family. As to quaternary structure, homodimer. Part of the ribosomal stalk of the 50S ribosomal subunit. Forms a multimeric L10(L12)X complex, where L10 forms an elongated spine to which 2 to 4 L12 dimers bind in a sequential fashion. Binds GTP-bound translation factors.

Its function is as follows. Forms part of the ribosomal stalk which helps the ribosome interact with GTP-bound translation factors. Is thus essential for accurate translation. This Mycoplasmopsis agalactiae (strain NCTC 10123 / CIP 59.7 / PG2) (Mycoplasma agalactiae) protein is Large ribosomal subunit protein bL12.